The primary structure comprises 400 residues: CCA-adding enzyme (400 aa).

Positions 28 and 31 each coordinate ATP. CTP-binding residues include Gly-28 and Arg-31. Residues Asp-41 and Asp-43 each contribute to the Mg(2+) site. ATP-binding residues include Arg-112, Asp-155, Arg-158, Arg-161, and Arg-164. 5 residues coordinate CTP: Arg-112, Asp-155, Arg-158, Arg-161, and Arg-164.

The protein belongs to the tRNA nucleotidyltransferase/poly(A) polymerase family. Bacterial CCA-adding enzyme type 3 subfamily. As to quaternary structure, homodimer. Mg(2+) is required as a cofactor.

It carries out the reaction a tRNA precursor + 2 CTP + ATP = a tRNA with a 3' CCA end + 3 diphosphate. It catalyses the reaction a tRNA with a 3' CCA end + 2 CTP + ATP = a tRNA with a 3' CCACCA end + 3 diphosphate. Catalyzes the addition and repair of the essential 3'-terminal CCA sequence in tRNAs without using a nucleic acid template. Adds these three nucleotides in the order of C, C, and A to the tRNA nucleotide-73, using CTP and ATP as substrates and producing inorganic pyrophosphate. tRNA 3'-terminal CCA addition is required both for tRNA processing and repair. Also involved in tRNA surveillance by mediating tandem CCA addition to generate a CCACCA at the 3' terminus of unstable tRNAs. While stable tRNAs receive only 3'-terminal CCA, unstable tRNAs are marked with CCACCA and rapidly degraded. In Staphylococcus aureus (strain MSSA476), this protein is CCA-adding enzyme.